The primary structure comprises 55 residues: Serine protease inhibitor Kazal-type 1 (55 aa).

The Kazal-like domain maps to 2-55; that stretch reads QGRDANCNYEFPGCPRNLEPVCGTDGNTYNNECLLCMENKKRDVPIRIQKDGPC. 3 disulfides stabilise this stretch: Cys8–Cys37, Cys15–Cys34, and Cys23–Cys55.

Its subcellular location is the secreted. Serine protease inhibitor which exhibits anti-trypsin activity. In the pancreas, protects against trypsin-catalyzed premature activation of zymogens. In terms of biological role, in the male reproductive tract, binds to sperm heads where it modulates sperm capacitance by inhibiting calcium uptake and nitrogen oxide (NO) production. This chain is Serine protease inhibitor Kazal-type 1 (SPINK1), found in Monodelphis domestica (Gray short-tailed opossum).